The following is a 440-amino-acid chain: Tyrosine--tRNA ligase (440 aa).

Tyr-46 contributes to the L-tyrosine binding site. Residues 51-60 carry the 'HIGH' region motif; sequence PTAASLHIGN. Residues Tyr-181 and Gln-185 each contribute to the L-tyrosine site. Residues 241–245 carry the 'KMSKS' region motif; that stretch reads KFGKS. ATP is bound at residue Lys-244. The region spanning 373–439 is the S4 RNA-binding domain; sequence DRVIDAAQAA…GKKALGAVEN (67 aa).

The protein belongs to the class-I aminoacyl-tRNA synthetase family. TyrS type 1 subfamily. In terms of assembly, homodimer.

It is found in the cytoplasm. The enzyme catalyses tRNA(Tyr) + L-tyrosine + ATP = L-tyrosyl-tRNA(Tyr) + AMP + diphosphate + H(+). In terms of biological role, catalyzes the attachment of tyrosine to tRNA(Tyr) in a two-step reaction: tyrosine is first activated by ATP to form Tyr-AMP and then transferred to the acceptor end of tRNA(Tyr). This Bifidobacterium longum (strain NCC 2705) protein is Tyrosine--tRNA ligase.